Consider the following 217-residue polypeptide: Aprataxin-like protein (217 aa).

Residues 6–139 (ALKNYVTSPE…HIHVISKDFH (134 aa)) enclose the HIT domain. Interaction with DNA regions lie at residues 34-38 (DSFPK), 121-132 (HSVPSMANLHIH), and 144-148 (KNKKH). The active-site Nucleophile is the His-130. Residues Cys-188, Cys-191, His-205, and Glu-209 each coordinate Zn(2+).

The protein localises to the nucleus. Its subcellular location is the cytoplasm. The enzyme catalyses a 5'-end adenosine-5'-diphospho-5'-2'-deoxyribonucleoside-DNA + H2O = a 5'-end 5'-phospho-2'-deoxyribonucleoside-DNA + AMP + 2 H(+). It catalyses the reaction a 5'-end adenosine-5'-diphospho-5'-ribonucleoside-2'-deoxyribonucleotide-DNA + H2O = a 5'-end 5'-phospho-ribonucleoside-2'-deoxyribonucleotide-DNA + AMP + 2 H(+). It carries out the reaction a 3'-end 2'-deoxyribonucleotide-3'-diphospho-5'-guanosine-DNA + H2O = a 3'-end 2'-deoxyribonucleotide 3'-phosphate-DNA + GMP + 2 H(+). Its function is as follows. DNA-binding protein involved in single-strand DNA break repair, double-strand DNA break repair and base excision repair. Resolves abortive DNA ligation intermediates formed either at base excision sites, or when DNA ligases attempt to repair non-ligatable breaks induced by reactive oxygen species. Catalyzes the release of adenylate groups covalently linked to 5'-phosphate termini, resulting in the production of 5'-phosphate termini that can be efficiently rejoined. Likewise, catalyzes the release of 3'-linked guanosine (DNAppG) and inosine (DNAppI) from DNA, but has higher specific activity with 5'-linked adenosine (AppDNA). The chain is Aprataxin-like protein (HNT3) from Saccharomyces cerevisiae (strain ATCC 204508 / S288c) (Baker's yeast).